The primary structure comprises 128 residues: Cytochrome c-type biogenesis protein CcmE (128 aa).

Topologically, residues 1–8 (MQKIVRNR) are cytoplasmic. The chain crosses the membrane as a helical; Signal-anchor for type II membrane protein span at residues 9 to 29 (LIKIIICFCSACLGISIILYN). Topologically, residues 30–128 (LEKNIIFFFP…KHDENYRPPS (99 aa)) are periplasmic. Heme-binding residues include H120 and Y124.

The protein belongs to the CcmE/CycJ family.

Its subcellular location is the cell inner membrane. In terms of biological role, heme chaperone required for the biogenesis of c-type cytochromes. Transiently binds heme delivered by CcmC and transfers the heme to apo-cytochromes in a process facilitated by CcmF and CcmH. The chain is Cytochrome c-type biogenesis protein CcmE from Rickettsia prowazekii (strain Madrid E).